Reading from the N-terminus, the 163-residue chain is Transcriptional repressor NrdR (163 aa).

A zinc finger lies at 3–34 (CPFCRHPDSRVVDSRVSDDGSSIRRRRQCPQC). An ATP-cone domain is found at 46–136 (LTVIKRSGIG…VYQAFESLDD (91 aa)).

The protein belongs to the NrdR family. It depends on Zn(2+) as a cofactor.

In terms of biological role, negatively regulates transcription of bacterial ribonucleotide reductase nrd genes and operons by binding to NrdR-boxes. This Renibacterium salmoninarum (strain ATCC 33209 / DSM 20767 / JCM 11484 / NBRC 15589 / NCIMB 2235) protein is Transcriptional repressor NrdR.